Reading from the N-terminus, the 477-residue chain is ATP synthase subunit beta (477 aa).

151 to 158 is an ATP binding site; the sequence is GGAGVGKT.

The protein belongs to the ATPase alpha/beta chains family. F-type ATPases have 2 components, CF(1) - the catalytic core - and CF(0) - the membrane proton channel. CF(1) has five subunits: alpha(3), beta(3), gamma(1), delta(1), epsilon(1). CF(0) has three main subunits: a(1), b(2) and c(9-12). The alpha and beta chains form an alternating ring which encloses part of the gamma chain. CF(1) is attached to CF(0) by a central stalk formed by the gamma and epsilon chains, while a peripheral stalk is formed by the delta and b chains.

The protein localises to the cell inner membrane. The enzyme catalyses ATP + H2O + 4 H(+)(in) = ADP + phosphate + 5 H(+)(out). Functionally, produces ATP from ADP in the presence of a proton gradient across the membrane. The catalytic sites are hosted primarily by the beta subunits. The sequence is that of ATP synthase subunit beta from Bradyrhizobium diazoefficiens (strain JCM 10833 / BCRC 13528 / IAM 13628 / NBRC 14792 / USDA 110).